Reading from the N-terminus, the 228-residue chain is Octanoyltransferase (228 aa).

Residues 30–213 enclose the BPL/LPL catalytic domain; that stretch reads NKVEDIMLLL…YFSRVFDFEP (184 aa). Residues 75 to 82, 143 to 145, and 156 to 158 contribute to the substrate site; these read RGGDVTYH, AIG, and GFA. Residue Cys174 is the Acyl-thioester intermediate of the active site.

Belongs to the LipB family.

It is found in the cytoplasm. The catalysed reaction is octanoyl-[ACP] + L-lysyl-[protein] = N(6)-octanoyl-L-lysyl-[protein] + holo-[ACP] + H(+). The protein operates within protein modification; protein lipoylation via endogenous pathway; protein N(6)-(lipoyl)lysine from octanoyl-[acyl-carrier-protein]: step 1/2. In terms of biological role, catalyzes the transfer of endogenously produced octanoic acid from octanoyl-acyl-carrier-protein onto the lipoyl domains of lipoate-dependent enzymes. Lipoyl-ACP can also act as a substrate although octanoyl-ACP is likely to be the physiological substrate. The protein is Octanoyltransferase of Desulforamulus reducens (strain ATCC BAA-1160 / DSM 100696 / MI-1) (Desulfotomaculum reducens).